The primary structure comprises 70 residues: uncharacterized protein (70 aa).

This is an uncharacterized protein from Treponema pallidum (strain Nichols).